The sequence spans 588 residues: A-type ATP synthase subunit A (588 aa).

237 to 244 (GPFGSGKT) contributes to the ATP binding site.

Belongs to the ATPase alpha/beta chains family. Has multiple subunits with at least A(3), B(3), C, D, E, F, H, I and proteolipid K(x).

The protein resides in the cell membrane. The enzyme catalyses ATP + H2O + 4 H(+)(in) = ADP + phosphate + 5 H(+)(out). In terms of biological role, component of the A-type ATP synthase that produces ATP from ADP in the presence of a proton gradient across the membrane. The A chain is the catalytic subunit. The protein is A-type ATP synthase subunit A of Methanoregula boonei (strain DSM 21154 / JCM 14090 / 6A8).